The primary structure comprises 515 residues: Envelope glycoprotein (515 aa).

Positions 1-33 are cleaved as a signal peptide; that stretch reads MPKERRSRRRPQPIIRWVSLTLTLLALCQPIQT. The Extracellular portion of the chain corresponds to 34–436; sequence WRCSLSLGNQ…GLTAWVRETI (403 aa). 2 N-linked (GlcNAc...) asparagine; by host glycosylation sites follow: Asn129 and Asn203. Residues 212–215 carry the CXXC motif; it reads CAIC. Disulfide bonds link Cys212-Cys215, Cys212-Cys392, and Cys384-Cys391. N-linked (GlcNAc...) asparagine; by host glycans are attached at residues Asn230, Asn251, Asn256, Asn271, and Asn287. A fusion peptide region spans residues 304-324; it reads VAALTLGLALSVGLTGINVAV. Coiled-coil stretches lie at residues 330–376 and 388–420; these read QRLT…WLYI and NEPCCFLRIQNDSIIRLGDLQPLSQRVSTDWQW. Asn351 carries N-linked (GlcNAc...) asparagine; by host glycosylation. Positions 365–381 are immunosuppression; that stretch reads AQNRRGLDWLYIRLGFQ. Residues 384 to 392 carry the CX6CC motif; sequence CPTINEPCC. A glycan (N-linked (GlcNAc...) asparagine; by host) is linked at Asn398. A helical membrane pass occupies residues 437–457; that stretch reads HSVLSLFLLALFLLFLAPCLI. A lipid anchor (S-palmitoyl cysteine; by host) is attached at Cys455. Residues 458-515 lie on the Cytoplasmic side of the membrane; the sequence is KCLTSRLLKLLRQAPHFPEISFPPKPDSDYQALLPSAPEIYSHLSPTKPDYINLRPCP.

As to quaternary structure, the mature envelope protein (Env) consists of a trimer of SU-TM heterodimers attached by a labile interchain disulfide bond. In terms of processing, specific enzymatic cleavages in vivo yield mature proteins. Envelope glycoproteins are synthesized as an inactive precursor that is N-glycosylated and processed likely by host cell furin or by a furin-like protease in the Golgi to yield the mature SU and TM proteins. The cleavage site between SU and TM requires the minimal sequence [KR]-X-[KR]-R. Post-translationally, the CXXC motif is highly conserved across a broad range of retroviral envelope proteins. It is thought to participate in the formation of a labile disulfide bond possibly with the CX6CC motif present in the transmembrane protein. Isomerization of the intersubunit disulfide bond to an SU intrachain disulfide bond is thought to occur upon receptor recognition in order to allow membrane fusion. The transmembrane protein is palmitoylated.

It localises to the virion membrane. The protein localises to the host cell membrane. Functionally, the surface protein (SU) attaches the virus to the host cell by binding to its receptor. This interaction triggers the refolding of the transmembrane protein (TM) and is thought to activate its fusogenic potential by unmasking its fusion peptide. Fusion occurs at the host cell plasma membrane. In terms of biological role, the transmembrane protein (TM) acts as a class I viral fusion protein. Under the current model, the protein has at least 3 conformational states: pre-fusion native state, pre-hairpin intermediate state, and post-fusion hairpin state. During viral and target cell membrane fusion, the coiled coil regions (heptad repeats) assume a trimer-of-hairpins structure, positioning the fusion peptide in close proximity to the C-terminal region of the ectodomain. The formation of this structure appears to drive apposition and subsequent fusion of viral and target cell membranes. Membranes fusion leads to delivery of the nucleocapsid into the cytoplasm. This Bos taurus (Bovine) protein is Envelope glycoprotein (env).